The primary structure comprises 345 residues: Methylthioribose-1-phosphate isomerase (345 aa).

Substrate-binding positions include 44 to 46 (RGA), arginine 86, and glutamine 194. Catalysis depends on aspartate 235, which acts as the Proton donor. 245 to 246 (NK) is a substrate binding site.

It belongs to the eIF-2B alpha/beta/delta subunits family. MtnA subfamily.

The catalysed reaction is 5-(methylsulfanyl)-alpha-D-ribose 1-phosphate = 5-(methylsulfanyl)-D-ribulose 1-phosphate. Its pathway is amino-acid biosynthesis; L-methionine biosynthesis via salvage pathway; L-methionine from S-methyl-5-thio-alpha-D-ribose 1-phosphate: step 1/6. Functionally, catalyzes the interconversion of methylthioribose-1-phosphate (MTR-1-P) into methylthioribulose-1-phosphate (MTRu-1-P). The protein is Methylthioribose-1-phosphate isomerase of Desulfitobacterium hafniense (strain DSM 10664 / DCB-2).